The sequence spans 255 residues: 5'-nucleotidase SurE (255 aa).

Positions 8, 9, 40, and 93 each coordinate a divalent metal cation.

The protein belongs to the SurE nucleotidase family. It depends on a divalent metal cation as a cofactor.

It is found in the cytoplasm. It catalyses the reaction a ribonucleoside 5'-phosphate + H2O = a ribonucleoside + phosphate. Functionally, nucleotidase that shows phosphatase activity on nucleoside 5'-monophosphates. In Rhodopseudomonas palustris (strain BisB5), this protein is 5'-nucleotidase SurE.